The chain runs to 121 residues: Large ribosomal subunit protein bL12 (121 aa).

It belongs to the bacterial ribosomal protein bL12 family. As to quaternary structure, homodimer. Part of the ribosomal stalk of the 50S ribosomal subunit. Forms a multimeric L10(L12)X complex, where L10 forms an elongated spine to which 2 to 4 L12 dimers bind in a sequential fashion. Binds GTP-bound translation factors.

In terms of biological role, forms part of the ribosomal stalk which helps the ribosome interact with GTP-bound translation factors. Is thus essential for accurate translation. The polypeptide is Large ribosomal subunit protein bL12 (Baumannia cicadellinicola subsp. Homalodisca coagulata).